Consider the following 270-residue polypeptide: Putative pyruvate, phosphate dikinase regulatory protein 2 (270 aa).

Residue 151-158 coordinates ADP; it reads GVSRTSKT.

The protein belongs to the pyruvate, phosphate/water dikinase regulatory protein family. PDRP subfamily.

The catalysed reaction is N(tele)-phospho-L-histidyl/L-threonyl-[pyruvate, phosphate dikinase] + ADP = N(tele)-phospho-L-histidyl/O-phospho-L-threonyl-[pyruvate, phosphate dikinase] + AMP + H(+). The enzyme catalyses N(tele)-phospho-L-histidyl/O-phospho-L-threonyl-[pyruvate, phosphate dikinase] + phosphate + H(+) = N(tele)-phospho-L-histidyl/L-threonyl-[pyruvate, phosphate dikinase] + diphosphate. Its function is as follows. Bifunctional serine/threonine kinase and phosphorylase involved in the regulation of the pyruvate, phosphate dikinase (PPDK) by catalyzing its phosphorylation/dephosphorylation. The sequence is that of Putative pyruvate, phosphate dikinase regulatory protein 2 from Listeria monocytogenes serovar 1/2a (strain ATCC BAA-679 / EGD-e).